The chain runs to 157 residues: Small ribosomal subunit protein uS7cz/uS7cy (157 aa).

Belongs to the universal ribosomal protein uS7 family. Part of the 30S ribosomal subunit.

The protein localises to the plastid. Its subcellular location is the chloroplast. Its function is as follows. One of the primary rRNA binding proteins, it binds directly to 16S rRNA where it nucleates assembly of the head domain of the 30S subunit. The chain is Small ribosomal subunit protein uS7cz/uS7cy (rps7-A) from Gnetum parvifolium (Small-leaved jointfir).